Here is a 1194-residue protein sequence, read N- to C-terminus: MESLLENPVRAVLYLKELTAIVQNQQSLIHTQRQRIDELERRLDELSAENRSLWEHQQLLQAQPPPGLVPPPSAPLPAPAATAPAATAAQEPLQDHGQLIPATPEPPLQHHGQLLAQPQPAPSSRVQTPQSPHQHPVAPGAVADKEKERPSSCCAAAGALLQHASPAALGKGVLSRRPKNETVLHQFCCPATDTEQKPACSDLASQSDGSCAQAGGGMEDSVVAAVAAGRPSAHAPKAQAPELQQEEERPGAVGSPRAGPLRAASPGQQQPALATALCSHTPAASEYELSLDLKNKQIEMLEHKYGGHLVSRRAACTIQTAFRQYQLSKNFEKIRNSLLESRLPRRISLRKVRAPTAESLVAEKALLESCGLLGLPLGRSPSLPPTFAGSLTELEDSFTEQVQSLAKSIDDALSTWSLKTMCSLQESGAYQLHQALHPSAGQPGLETEAAREPDSGPGSGDEAGSLPQGHSGTLMMAFRDVTVQIANQNISVSSSTALSVANCLGAQTAQATAEPAAVQTEQGDAATQEVSEVPASELMDPPVEDSEAAESGAQSAHEPTVAEAVVEEAVATEAEEEEEGAGQAGKGAEAEVGDNSEQLSSSSASTKSAKSGSEVSAAASKEALQAVILSLPRYHCENPASCRSPTLSTDTLRKRLYRIGLNLFNINPDKGIQFLISRGFIPDTPIGVAHFLLQRKGLSRQMIGEFLGNSKKQFNRDVLDCVVDEMDFSNMELDEALRKFQAHIRVQGEAQKVERLIEAFSQRYCMCNPEVVQQFHNPDTIFILAFAIILLNTDMYSPNIKPDRKMMLEDFIRNLRGVDDGADIPRELVVGIYERIQQKELKSNEDHVTYVTKVEKSIVGMKTVLSMPHRRLVCCSRLFEVTDVNKLQKQAAHQREVFLFNDLLVILKLCPKKKSSFTYTFCKAVGLLGMRFHLFENEYYSHGITLATPLSGSEKKQVLHFCALGSDEMQKFVEDLKESIAEVTELEQIRIEWELERQQGTKTLSARSAGAQGDPQSKQGSPTAKREAMAGEKATESSGEVSIHNRLQTFQHSPKLGVERGAPAPSPPTSPPPPLPPDPQPSPLREQPPPLPLPPPTPPGTLVQCQQIVKVIVLDKPCLARMEPLLSQALSCYASSSSDSCGSTPLRGPGSPVKVIHQPPLPPPPPPYNHPHQFCPPGSLLLRRRYSSGSRSLV.

Residues 20–56 adopt a coiled-coil conformation; the sequence is AIVQNQQSLIHTQRQRIDELERRLDELSAENRSLWEH. 2 disordered regions span residues 62–149 and 229–272; these read AQPP…EKER and GRPS…QQPA. Pro residues predominate over residues 63–78; the sequence is QPPPGLVPPPSAPLPA. The span at 79 to 92 shows a compositional bias: low complexity; it reads PAATAPAATAAQEP. A compositionally biased stretch (polar residues) spans 122-133; that stretch reads PSSRVQTPQSPH. Serine 255 carries the phosphoserine modification. Residues 311 to 340 enclose the IQ domain; sequence SRRAACTIQTAFRQYQLSKNFEKIRNSLLE. Disordered regions lie at residues 439-471 and 515-610; these read SAGQPGLETEAAREPDSGPGSGDEAGSLPQGHS and PAAV…KSAK. 2 stretches are compositionally biased toward low complexity: residues 561–572 and 600–610; these read VAEAVVEEAVAT and SSSSASTKSAK. The SEC7 domain maps to 646 to 839; the sequence is TLSTDTLRKR…VGIYERIQQK (194 aa). A PH domain is found at 852 to 985; that stretch reads TKVEKSIVGM…LKESIAEVTE (134 aa). 2 disordered regions span residues 1002–1099 and 1137–1175; these read KTLS…PTPP and SSDSCGSTPLRGPGSPVKVIHQPPLPPPPPPYNHPHQFC. A compositionally biased stretch (basic and acidic residues) spans 1024–1035; the sequence is AKREAMAGEKAT. Polar residues predominate over residues 1036–1052; that stretch reads ESSGEVSIHNRLQTFQH. 2 stretches are compositionally biased toward pro residues: residues 1064 to 1099 and 1159 to 1169; these read APSPPTSPPPPLPPDPQPSPLREQPPPLPLPPPTPP and PPLPPPPPPYN.

This sequence belongs to the BRAG family. As to quaternary structure, interacts with DLG1 and DLG4. Interacts with GPHN. Expressed in brain. Localized to dendrites, as well as somas of neuronal cells.

The protein localises to the cytoplasm. The protein resides in the postsynaptic density. Acts as a guanine nucleotide exchange factor (GEF) for ARF1. The protein is IQ motif and SEC7 domain-containing protein 3 (Iqsec3) of Rattus norvegicus (Rat).